Reading from the N-terminus, the 687-residue chain is DNA-directed RNA polymerase subunit beta' (687 aa).

Positions 69, 71, 87, and 90 each coordinate Zn(2+). 3 residues coordinate Mg(2+): aspartate 493, aspartate 495, and aspartate 497.

The protein belongs to the RNA polymerase beta' chain family. RpoC1 subfamily. In plastids the minimal PEP RNA polymerase catalytic core is composed of four subunits: alpha, beta, beta', and beta''. When a (nuclear-encoded) sigma factor is associated with the core the holoenzyme is formed, which can initiate transcription. Mg(2+) is required as a cofactor. Requires Zn(2+) as cofactor.

It is found in the plastid. The protein localises to the chloroplast. The enzyme catalyses RNA(n) + a ribonucleoside 5'-triphosphate = RNA(n+1) + diphosphate. Its function is as follows. DNA-dependent RNA polymerase catalyzes the transcription of DNA into RNA using the four ribonucleoside triphosphates as substrates. The sequence is that of DNA-directed RNA polymerase subunit beta' from Angiopteris evecta (Mule's foot fern).